The following is a 450-amino-acid chain: Guanine deaminase (450 aa).

Histidine 88 and histidine 90 together coordinate Zn(2+). Residues 90–93, 218–219, 245–248, and aspartate 335 contribute to the substrate site; these read HAPQ, RF, and HLSE. Residues histidine 245 and aspartate 335 each coordinate Zn(2+).

It belongs to the metallo-dependent hydrolases superfamily. ATZ/TRZ family. The cofactor is Zn(2+).

The enzyme catalyses guanine + H2O + H(+) = xanthine + NH4(+). It functions in the pathway purine metabolism; guanine degradation; xanthine from guanine: step 1/1. In terms of biological role, catalyzes the hydrolytic deamination of guanine, producing xanthine and ammonia. The polypeptide is Guanine deaminase (guaD) (Dictyostelium discoideum (Social amoeba)).